The primary structure comprises 194 residues: ATP-dependent Clp protease proteolytic subunit (194 aa).

The Nucleophile role is filled by Ser97. The active site involves His122.

This sequence belongs to the peptidase S14 family. Fourteen ClpP subunits assemble into 2 heptameric rings which stack back to back to give a disk-like structure with a central cavity, resembling the structure of eukaryotic proteasomes.

Its subcellular location is the cytoplasm. It catalyses the reaction Hydrolysis of proteins to small peptides in the presence of ATP and magnesium. alpha-casein is the usual test substrate. In the absence of ATP, only oligopeptides shorter than five residues are hydrolyzed (such as succinyl-Leu-Tyr-|-NHMec, and Leu-Tyr-Leu-|-Tyr-Trp, in which cleavage of the -Tyr-|-Leu- and -Tyr-|-Trp bonds also occurs).. In terms of biological role, cleaves peptides in various proteins in a process that requires ATP hydrolysis. Has a chymotrypsin-like activity. Plays a major role in the degradation of misfolded proteins. In Campylobacter jejuni subsp. jejuni serotype O:23/36 (strain 81-176), this protein is ATP-dependent Clp protease proteolytic subunit.